Consider the following 262-residue polypeptide: Apolipoprotein A-I (262 aa).

Residues 1 to 18 form the signal peptide; that stretch reads MKFLALALTILLAAATQA. The tract at residues 32-63 is 3 X approximate tandem repeats; the sequence is VKVAMMEYMAQVKETGQRSIDLLDDTEFKEYK. Tandem repeats lie at residues 64–85 and 87–107. The 10 X approximate tandem repeats stretch occupies residues 64–262; sequence VQLSQSLDNL…YETISQAMKA (199 aa). The 3; half-length repeat unit spans residues 108 to 118; that stretch reads KDVEDVRTQLE. 5 consecutive repeat copies span residues 119 to 140, 141 to 162, 163 to 184, 185 to 206, and 207 to 228. Residues 229–239 form a 9; half-length repeat; sequence PLTNDFKGQVG. Repeat 10 spans residues 240-262; the sequence is PAAEQAKEKLMDFYETISQAMKA.

It belongs to the apolipoprotein A1/A4/E family.

The protein resides in the secreted. Its function is as follows. Participates in the reverse transport of cholesterol from tissues to the liver for excretion by promoting cholesterol efflux from tissues and by acting as a cofactor for the lecithin cholesterol acyltransferase (LCAT). This is Apolipoprotein A-I (apoa1) from Salmo trutta (Brown trout).